A 134-amino-acid chain; its full sequence is Large ribosomal subunit protein bL20 (134 aa).

It belongs to the bacterial ribosomal protein bL20 family.

Functionally, binds directly to 23S ribosomal RNA and is necessary for the in vitro assembly process of the 50S ribosomal subunit. It is not involved in the protein synthesizing functions of that subunit. The sequence is that of Large ribosomal subunit protein bL20 from Allorhizobium ampelinum (strain ATCC BAA-846 / DSM 112012 / S4) (Agrobacterium vitis (strain S4)).